The primary structure comprises 601 residues: Proline--tRNA ligase (601 aa).

This sequence belongs to the class-II aminoacyl-tRNA synthetase family. ProS type 1 subfamily. Homodimer.

It localises to the cytoplasm. The catalysed reaction is tRNA(Pro) + L-proline + ATP = L-prolyl-tRNA(Pro) + AMP + diphosphate. Its function is as follows. Catalyzes the attachment of proline to tRNA(Pro) in a two-step reaction: proline is first activated by ATP to form Pro-AMP and then transferred to the acceptor end of tRNA(Pro). As ProRS can inadvertently accommodate and process non-cognate amino acids such as alanine and cysteine, to avoid such errors it has two additional distinct editing activities against alanine. One activity is designated as 'pretransfer' editing and involves the tRNA(Pro)-independent hydrolysis of activated Ala-AMP. The other activity is designated 'posttransfer' editing and involves deacylation of mischarged Ala-tRNA(Pro). The misacylated Cys-tRNA(Pro) is not edited by ProRS. This is Proline--tRNA ligase from Trichodesmium erythraeum (strain IMS101).